The sequence spans 474 residues: Putative matrix metalloproteinase (474 aa).

Residues methionine 1–serine 17 form the signal peptide. Histidine 189 provides a ligand contact to Zn(2+). Glutamate 190 is an active-site residue. Positions 193 and 199 each coordinate Zn(2+). The Hemopexin repeat unit spans residues alanine 299–proline 344.

This sequence belongs to the peptidase M10A family. Requires Zn(2+) as cofactor.

The protein is Putative matrix metalloproteinase of Heliothis virescens ascovirus 3e (HvAV-3e).